An 89-amino-acid chain; its full sequence is Small ribosomal subunit protein bS18 (89 aa).

Residues 1–15 are compositionally biased toward low complexity; the sequence is MTTANTNETAAAAAA. Residues 1 to 22 form a disordered region; the sequence is MTTANTNETAAAAAAKNRRNKK.

The protein belongs to the bacterial ribosomal protein bS18 family. Part of the 30S ribosomal subunit. Forms a tight heterodimer with protein bS6.

Binds as a heterodimer with protein bS6 to the central domain of the 16S rRNA, where it helps stabilize the platform of the 30S subunit. This is Small ribosomal subunit protein bS18 from Caldanaerobacter subterraneus subsp. tengcongensis (strain DSM 15242 / JCM 11007 / NBRC 100824 / MB4) (Thermoanaerobacter tengcongensis).